The chain runs to 309 residues: Tumor necrosis factor ligand superfamily member 9 (309 aa).

Positions 1–16 are enriched in basic and acidic residues; it reads MDQHTLDVEDTADARH. Residues 1–20 are disordered; it reads MDQHTLDVEDTADARHPAGT. The Cytoplasmic segment spans residues 1 to 82; it reads MDQHTLDVED…ALNFCSRHPK (82 aa). Residues 83 to 103 form a helical; Signal-anchor for type II membrane protein membrane-spanning segment; that stretch reads LYGLVALVLLLLIAACVPIFT. At 104–309 the chain is on the extracellular side; it reads RTEPRPALTI…FLVKPDNPWE (206 aa). 3 N-linked (GlcNAc...) asparagine glycosylation sites follow: Asn139, Asn161, and Asn293. One can recognise a THD domain in the interval 147 to 302; it reads VFAKLLAKNQ…NTTSFGLFLV (156 aa).

Belongs to the tumor necrosis factor family. Homotrimer.

It is found in the membrane. Functionally, cytokine that binds to TNFRSF9. Induces the proliferation of activated peripheral blood T-cells. May have a role in activation-induced cell death (AICD). May play a role in cognate interactions between T-cells and B-cells/macrophages. This is Tumor necrosis factor ligand superfamily member 9 (Tnfsf9) from Mus musculus (Mouse).